The sequence spans 381 residues: E3 ubiquitin-protein ligase RNF13 (381 aa).

An N-terminal signal peptide occupies residues 1–34 (MLLSIGMLMLSATQVYTILTVQLFAFLNLLPVEA). Topologically, residues 35–182 (DILAYNFENA…VPELSLPLEY (148 aa)) are lumenal. Residues 64-160 (LKGFLINSKP…GESSANSLKD (97 aa)) enclose the PA domain. A glycan (N-linked (GlcNAc...) asparagine) is linked at Asn88. A helical membrane pass occupies residues 183-203 (YLIPFLIIVGICLILIVIFMI). The Cytoplasmic segment spans residues 204–381 (TKFVQDRHRN…EQDYNIANTV (178 aa)). The RING-type; atypical zinc finger occupies 240-282 (CAICLEEYEDGDKLRILPCSHAYHCKCVDPWLTKTKKTCPVCK). A disordered region spans residues 285–381 (VVPSQGDSDS…EQDYNIANTV (97 aa)). A compositionally biased stretch (polar residues) spans 317–328 (SARTQSFGSLSE). Over residues 339-357 (SDYEDDDNEETDSSDADNE) the composition is skewed to acidic residues. The segment covering 365 to 381 (VQLQPNGEQDYNIANTV) has biased composition (polar residues).

As to quaternary structure, interacts with ERN1. In terms of processing, autoubiquitinated. N-glycosylated and also modified with chondroitin sulfate. Expressed in the brain, heart, kidney, liver and spleen. Higher expression in adult tissues compared to the embryonic counterparts.

The protein resides in the endoplasmic reticulum membrane. It is found in the late endosome membrane. Its subcellular location is the lysosome membrane. It localises to the nucleus inner membrane. It catalyses the reaction S-ubiquitinyl-[E2 ubiquitin-conjugating enzyme]-L-cysteine + [acceptor protein]-L-lysine = [E2 ubiquitin-conjugating enzyme]-L-cysteine + N(6)-ubiquitinyl-[acceptor protein]-L-lysine.. It functions in the pathway protein modification; protein ubiquitination. In terms of biological role, E3 ubiquitin-protein ligase that regulates cell proliferation. Involved in apoptosis regulation. Mediates ER stress-induced activation of JNK signaling pathway and apoptosis by promoting ERN1 activation and splicing of XBP1 mRNA. Also involved in protein trafficking and localization. This chain is E3 ubiquitin-protein ligase RNF13 (Rnf13), found in Mus musculus (Mouse).